Reading from the N-terminus, the 522-residue chain is Putative E3 ubiquitin-protein ligase RING1a (522 aa).

Residues Met-1–Ser-10 are compositionally biased toward polar residues. The interval Met-1–Gln-119 is disordered. Basic and acidic residues predominate over residues Leu-32–Asp-64. Residues Ala-65–Asp-106 are compositionally biased toward acidic residues. An RING-type zinc finger spans residues Cys-136–Arg-176. Disordered regions lie at residues Val-250–Gly-347 and Arg-363–Arg-385. Positions Asn-287–Arg-306 are enriched in basic and acidic residues. The span at Ser-316–Ser-325 shows a compositional bias: low complexity. Polar residues-rich tracts occupy residues Gly-326–Asp-336 and Thr-366–Val-384.

Homodimer or heterodimer with RING1B. Interacts with CLF. Component of the PRC1-like complex, at least composed of RING1A, RING1B and LHP1.

Its subcellular location is the nucleus. The catalysed reaction is S-ubiquitinyl-[E2 ubiquitin-conjugating enzyme]-L-cysteine + [acceptor protein]-L-lysine = [E2 ubiquitin-conjugating enzyme]-L-cysteine + N(6)-ubiquitinyl-[acceptor protein]-L-lysine.. It functions in the pathway protein modification; protein ubiquitination. Putative E3 ubiquitin-protein ligase that mediates monoubiquitination of 'Lys-119' of histone H2A (H2AK119ub), thereby playing a central role in histone code and gene regulation. In terms of biological role, as part of the PRC1-like complex, repress class I KNOX gene expression. PcG PRC1 complex maintains the transcriptionally repressive state of many genes, including Hox genes, throughout development. PcG PRC1 complex acts via chromatin remodeling and modification of histones, rendering chromatin heritably changed in its expressibility. This Arabidopsis thaliana (Mouse-ear cress) protein is Putative E3 ubiquitin-protein ligase RING1a (RING1A).